A 1041-amino-acid chain; its full sequence is DNA polymerase catalytic subunit (1041 aa).

The tract at residues 1–23 (MAFFNPYFKSKNKGSDMPPKQSM) is disordered.

It belongs to the DNA polymerase type-B family.

It is found in the host nucleus. The enzyme catalyses DNA(n) + a 2'-deoxyribonucleoside 5'-triphosphate = DNA(n+1) + diphosphate. It carries out the reaction Endonucleolytic cleavage to 5'-phosphomonoester.. Replicates viral genomic DNA. The replication complex is composed of six viral proteins: the DNA polymerase, processivity factor, primase, primase-associated factor, helicase, and ssDNA-binding protein. Additionally, the polymerase contains an intrinsic ribonuclease H (RNase H) activity that specifically degrades RNA/DNA heteroduplexes or duplex DNA substrates in the 5' to 3' direction. Therefore, it can catalyze the excision of the RNA primers that initiate the synthesis of Okazaki fragments at a replication fork during viral DNA replication. This Elephantid herpesvirus 1 (isolate Asian elephant/Berlin/Kiba/1998) (EIHV-1) protein is DNA polymerase catalytic subunit.